Here is a 369-residue protein sequence, read N- to C-terminus: UDP-glucose 4-epimerase 4 (369 aa).

19–50 (TVLVTGGAGYIGSHTVLQLLAAGFRVVVADSL) contacts NAD(+). Serine 144 serves as a coordination point for substrate. Tyrosine 168 serves as the catalytic Proton acceptor.

The protein belongs to the NAD(P)-dependent epimerase/dehydratase family. NAD(+) is required as a cofactor.

The catalysed reaction is UDP-alpha-D-glucose = UDP-alpha-D-galactose. The protein operates within carbohydrate metabolism; galactose metabolism. Catalyzes the interconversion between UDP-glucose and UDP-galactose. The polypeptide is UDP-glucose 4-epimerase 4 (UGE-4) (Oryza sativa subsp. japonica (Rice)).